The following is a 122-amino-acid chain: Large ribosomal subunit protein uL14 (122 aa).

This sequence belongs to the universal ribosomal protein uL14 family. In terms of assembly, part of the 50S ribosomal subunit. Forms a cluster with proteins L3 and L19. In the 70S ribosome, L14 and L19 interact and together make contacts with the 16S rRNA in bridges B5 and B8.

Its function is as follows. Binds to 23S rRNA. Forms part of two intersubunit bridges in the 70S ribosome. This is Large ribosomal subunit protein uL14 from Dehalococcoides mccartyi (strain ATCC BAA-2266 / KCTC 15142 / 195) (Dehalococcoides ethenogenes (strain 195)).